The chain runs to 317 residues: Protoheme IX farnesyltransferase (317 aa).

A run of 9 helical transmembrane segments spans residues 36–56 (VMVL…ATVN), 57–77 (PVIA…SGCL), 108–128 (LAFG…ASNW), 129–149 (LAAG…SMWL), 157–177 (IVIG…AVTG), 184–204 (LVLF…LALV), 230–247 (IVWY…PVWL), 251–273 (GWLY…VQVY), and 284–304 (AAMG…SALL).

It belongs to the UbiA prenyltransferase family. Protoheme IX farnesyltransferase subfamily.

Its subcellular location is the cell inner membrane. The catalysed reaction is heme b + (2E,6E)-farnesyl diphosphate + H2O = Fe(II)-heme o + diphosphate. It participates in porphyrin-containing compound metabolism; heme O biosynthesis; heme O from protoheme: step 1/1. Functionally, converts heme B (protoheme IX) to heme O by substitution of the vinyl group on carbon 2 of heme B porphyrin ring with a hydroxyethyl farnesyl side group. The polypeptide is Protoheme IX farnesyltransferase (Methylorubrum populi (strain ATCC BAA-705 / NCIMB 13946 / BJ001) (Methylobacterium populi)).